The chain runs to 175 residues: Crossover junction endodeoxyribonuclease RuvC (175 aa).

Active-site residues include aspartate 7, glutamate 68, and aspartate 141. The Mg(2+) site is built by aspartate 7, glutamate 68, and aspartate 141.

Belongs to the RuvC family. As to quaternary structure, homodimer which binds Holliday junction (HJ) DNA. The HJ becomes 2-fold symmetrical on binding to RuvC with unstacked arms; it has a different conformation from HJ DNA in complex with RuvA. In the full resolvosome a probable DNA-RuvA(4)-RuvB(12)-RuvC(2) complex forms which resolves the HJ. It depends on Mg(2+) as a cofactor.

The protein localises to the cytoplasm. The enzyme catalyses Endonucleolytic cleavage at a junction such as a reciprocal single-stranded crossover between two homologous DNA duplexes (Holliday junction).. The RuvA-RuvB-RuvC complex processes Holliday junction (HJ) DNA during genetic recombination and DNA repair. Endonuclease that resolves HJ intermediates. Cleaves cruciform DNA by making single-stranded nicks across the HJ at symmetrical positions within the homologous arms, yielding a 5'-phosphate and a 3'-hydroxyl group; requires a central core of homology in the junction. The consensus cleavage sequence is 5'-(A/T)TT(C/G)-3'. Cleavage occurs on the 3'-side of the TT dinucleotide at the point of strand exchange. HJ branch migration catalyzed by RuvA-RuvB allows RuvC to scan DNA until it finds its consensus sequence, where it cleaves and resolves the cruciform DNA. The polypeptide is Crossover junction endodeoxyribonuclease RuvC (Salinispora arenicola (strain CNS-205)).